A 478-amino-acid chain; its full sequence is Methylenetetrahydrofolate--tRNA-(uracil-5-)-methyltransferase TrmFO (478 aa).

An FAD-binding site is contributed by 16–21; sequence GAGLAG. The interval 429 to 448 is disordered; the sequence is PLANPPTKGPDGKRLRGPEK. Residues 438 to 448 are compositionally biased toward basic and acidic residues; the sequence is PDGKRLRGPEK.

It belongs to the MnmG family. TrmFO subfamily. The cofactor is FAD.

The protein localises to the cytoplasm. The catalysed reaction is uridine(54) in tRNA + (6R)-5,10-methylene-5,6,7,8-tetrahydrofolate + NADH + H(+) = 5-methyluridine(54) in tRNA + (6S)-5,6,7,8-tetrahydrofolate + NAD(+). It catalyses the reaction uridine(54) in tRNA + (6R)-5,10-methylene-5,6,7,8-tetrahydrofolate + NADPH + H(+) = 5-methyluridine(54) in tRNA + (6S)-5,6,7,8-tetrahydrofolate + NADP(+). Its function is as follows. Catalyzes the folate-dependent formation of 5-methyl-uridine at position 54 (M-5-U54) in all tRNAs. The polypeptide is Methylenetetrahydrofolate--tRNA-(uracil-5-)-methyltransferase TrmFO (Rhodopseudomonas palustris (strain ATCC BAA-98 / CGA009)).